Reading from the N-terminus, the 730-residue chain is Translation initiation factor IF-2 (730 aa).

Residues 48-151 (GNGNQKQGGS…NKAKPLPEKV (104 aa)) are disordered. 2 stretches are compositionally biased toward basic and acidic residues: residues 61–77 (EQQKKAGEKKPAQDHGQ) and 89–104 (NQHDRSQGSDQQKGKA). Basic residues predominate over residues 110-123 (KPKHKGNKNKKQHQ). The segment covering 137 to 148 (RQPEMNKAKPLP) has biased composition (basic and acidic residues). Positions 231–400 (ERPPVVTIMG…LLVAEVEELK (170 aa)) constitute a tr-type G domain. The tract at residues 240 to 247 (GHVDHGKT) is G1. Position 240-247 (240-247 (GHVDHGKT)) interacts with GTP. The tract at residues 265-269 (GITQH) is G2. The segment at 286 to 289 (DTPG) is G3. GTP is bound by residues 286–290 (DTPGH) and 340–343 (NKMD). The segment at 340-343 (NKMD) is G4. Residues 376 to 378 (SAL) are G5.

The protein belongs to the TRAFAC class translation factor GTPase superfamily. Classic translation factor GTPase family. IF-2 subfamily.

The protein resides in the cytoplasm. In terms of biological role, one of the essential components for the initiation of protein synthesis. Protects formylmethionyl-tRNA from spontaneous hydrolysis and promotes its binding to the 30S ribosomal subunits. Also involved in the hydrolysis of GTP during the formation of the 70S ribosomal complex. This is Translation initiation factor IF-2 from Halalkalibacterium halodurans (strain ATCC BAA-125 / DSM 18197 / FERM 7344 / JCM 9153 / C-125) (Bacillus halodurans).